The sequence spans 488 residues: Protein unzipped (488 aa).

The N-terminal stretch at 1–21 is a signal peptide; the sequence is MTSNSCLISLGLLLVLIQILA. Residues 22-465 lie on the Extracellular side of the membrane; it reads PAKAAEHSVF…DVALAGFGVN (444 aa). Asn-35, Asn-232, Asn-317, and Asn-374 each carry an N-linked (GlcNAc...) asparagine glycan. The span at 380 to 400 shows a compositional bias: low complexity; sequence TTTTTTTTSTSTTTHATTTST. Residues 380–453 are disordered; the sequence is TTTTTTTTST…EAPENMSSDP (74 aa). A glycan (N-linked (GlcNAc...) asparagine) is linked at Asn-448. Residues 466–486 form a helical membrane-spanning segment; it reads AAGSTFIAGSALLTLLLTIFL. Topologically, residues 487 to 488 are cytoplasmic; that stretch reads SL.

It localises to the membrane. In terms of biological role, required for normal axon patterning during neurogenesis. The chain is Protein unzipped (uzip) from Drosophila melanogaster (Fruit fly).